We begin with the raw amino-acid sequence, 362 residues long: Fructose-bisphosphate aldolase (362 aa).

Asp-33 lines the dihydroxyacetone phosphate pocket. Residues Ser-35 and Thr-38 each contribute to the D-glyceraldehyde 3-phosphate site. A beta-D-fructose 1,6-bisphosphate-binding site is contributed by Arg-42. Lys-106 contributes to the D-glyceraldehyde 3-phosphate binding site. A dihydroxyacetone phosphate-binding site is contributed by Lys-145. A D-glyceraldehyde 3-phosphate-binding site is contributed by Glu-188. Catalysis depends on Glu-188, which acts as the Proton acceptor. Residues Lys-230, Ser-272, and Gly-273 each coordinate dihydroxyacetone phosphate. Lys-230 functions as the Schiff-base intermediate with dihydroxyacetone phosphate in the catalytic mechanism. Residues 272–274 and Ser-300 contribute to the beta-D-fructose 1,6-bisphosphate site; that span reads SGG. Positions 302 and 303 each coordinate dihydroxyacetone phosphate. Arg-303 is a beta-D-fructose 1,6-bisphosphate binding site.

The protein belongs to the class I fructose-bisphosphate aldolase family. Homotetramer. Interacts with TRAP (via cytoplasmic domain); the interaction prevents substrate binding and thereby inhibits aldolase activity. Interacts with MTRAP (via cytoplasmic domain); MTRAP phosphorylation may increase the binding to FBPA. Interact with RH1 (via cytoplasmic domain). Interacts with RH2b (via cytoplasmic domain). Interacts with RH4 (via cytoplasmic domain). Interacts with AMA1 (via cytoplasmic domain); the interaction is weak, however it may be increased upon AMA1 phosphorylation. Interacts with EBA140 (via cytoplasmic domain); the interaction is weak. Interacts with EBA175 (via cytoplasmic domain); the interaction is weak. Interacts with EBA181 (via cytoplasmic domain); the interaction is weak. Interacts with G-actin and F-actin. May interact with ACT2/actin II; the interaction inhibits FBPA catalytic activity. Interacts with human SLC4A1/band 3 (via N-terminus); the interaction inhibits FBPA catalytic activity.

It localises to the cytoplasm. The protein resides in the membrane. Its subcellular location is the host cell membrane. The enzyme catalyses beta-D-fructose 1,6-bisphosphate = D-glyceraldehyde 3-phosphate + dihydroxyacetone phosphate. It functions in the pathway carbohydrate degradation; glycolysis; D-glyceraldehyde 3-phosphate and glycerone phosphate from D-glucose: step 4/4. The cytoplasmic tail of TRAP and probably other adhesins acts as a competitive inhibitor as the binding sites of the glycolytic substrate fructose 1,6-bisphosphate and TRAP partially overlap. Inhibited by suramin, an antiparasitic drug used to treat Trypanosome-mediated infection. Functionally, plays a key role in glycolysis by catalyzing the cleavage of fructose 1,6-bisphosphate into dihydroxyacetone phosphate and glyceraldehyde 3-phosphate. Independently of its catalytic activity, connects the actin filaments, and thus the actomyosin motor, to cell surface adhesins of the thrombospondin-related anonymous protein (TRAP), the erythrocyte binding ligand (EBL) and reticulocyte binding homolog (RH) protein families; this interaction is probably involved in transducing the motor force across the parasite surface required for sporozoite and ookinete gliding motility and merozoite invasion. Stimulates actin polymerisation. This Plasmodium falciparum (isolate K1 / Thailand) protein is Fructose-bisphosphate aldolase.